The following is a 263-amino-acid chain: S-acyl fatty acid synthase thioesterase, medium chain (263 aa).

Methionine 1 bears the N-acetylmethionine mark. Catalysis depends on residues serine 101 and histidine 237. The interval 262–263 is important for interaction with FASN; the sequence is LT.

Belongs to the thioesterase family. Interacts (via C-terminus) with FASN.

Its subcellular location is the cytoplasm. The protein localises to the cytosol. The catalysed reaction is (9Z)-octadecenoyl-[ACP] + H2O = (9Z)-octadecenoate + holo-[ACP] + H(+). The enzyme catalyses decanoyl-CoA + H2O = decanoate + CoA + H(+). It catalyses the reaction dodecanoyl-CoA + H2O = dodecanoate + CoA + H(+). It carries out the reaction tetradecanoyl-CoA + H2O = tetradecanoate + CoA + H(+). The catalysed reaction is hexadecanoyl-CoA + H2O = hexadecanoate + CoA + H(+). Functionally, contributes to the release of free fatty acids from fatty acid synthase (FASN). Has broad substrate specificity, giving rise to a range of free fatty acids with chain lengths between 10 and 16 carbon atoms (C10 - C16). This Rattus norvegicus (Rat) protein is S-acyl fatty acid synthase thioesterase, medium chain.